Here is a 193-residue protein sequence, read N- to C-terminus: Large ribosomal subunit protein eL18 (193 aa).

The tract at residues 158 to 193 is disordered; it reads HFGAAGVPGSHAKPHVSSRGKERQRSSKRRHAFRHK. Over residues 183 to 193 the composition is skewed to basic residues; the sequence is SSKRRHAFRHK.

This sequence belongs to the eukaryotic ribosomal protein eL18 family.

The protein localises to the cytoplasm. The chain is Large ribosomal subunit protein eL18 (RPL18-A) from Trypanosoma brucei brucei (strain 927/4 GUTat10.1).